Here is a 220-residue protein sequence, read N- to C-terminus: Peritrophin-55 (220 aa).

An N-terminal signal peptide occupies residues methionine 1–alanine 19. The N-linked (GlcNAc...) asparagine glycan is linked to asparagine 29. Positions isoleucine 33 to tyrosine 95 constitute a Chitin-binding type-2 domain. Residues cysteine 68 and cysteine 84 are joined by a disulfide bond. Positions threonine 116–asparagine 165 are enriched in low complexity. Residues threonine 116 to asparagine 220 are disordered. Positions proline 197 to glycine 210 are enriched in pro residues.

Glycosylated. In terms of tissue distribution, larval peritrophic membrane.

Functionally, may bind oligosaccharide structures. This is Peritrophin-55 from Lucilia cuprina (Green bottle fly).